The following is a 331-amino-acid chain: Phosphate acyltransferase (331 aa).

It belongs to the PlsX family. As to quaternary structure, homodimer. Probably interacts with PlsY.

It is found in the cytoplasm. The enzyme catalyses a fatty acyl-[ACP] + phosphate = an acyl phosphate + holo-[ACP]. It functions in the pathway lipid metabolism; phospholipid metabolism. Its function is as follows. Catalyzes the reversible formation of acyl-phosphate (acyl-PO(4)) from acyl-[acyl-carrier-protein] (acyl-ACP). This enzyme utilizes acyl-ACP as fatty acyl donor, but not acyl-CoA. The polypeptide is Phosphate acyltransferase (Malacoplasma penetrans (strain HF-2) (Mycoplasma penetrans)).